Consider the following 276-residue polypeptide: Ribosomal RNA small subunit methyltransferase A (276 aa).

S-adenosyl-L-methionine is bound by residues Asn-19, Leu-21, Gly-46, Glu-71, Asp-94, and Asn-117.

Belongs to the class I-like SAM-binding methyltransferase superfamily. rRNA adenine N(6)-methyltransferase family. RsmA subfamily.

It is found in the cytoplasm. It catalyses the reaction adenosine(1518)/adenosine(1519) in 16S rRNA + 4 S-adenosyl-L-methionine = N(6)-dimethyladenosine(1518)/N(6)-dimethyladenosine(1519) in 16S rRNA + 4 S-adenosyl-L-homocysteine + 4 H(+). In terms of biological role, specifically dimethylates two adjacent adenosines (A1518 and A1519) in the loop of a conserved hairpin near the 3'-end of 16S rRNA in the 30S particle. May play a critical role in biogenesis of 30S subunits. The protein is Ribosomal RNA small subunit methyltransferase A of Burkholderia ambifaria (strain ATCC BAA-244 / DSM 16087 / CCUG 44356 / LMG 19182 / AMMD) (Burkholderia cepacia (strain AMMD)).